A 448-amino-acid polypeptide reads, in one-letter code: tRNA modification GTPase MnmE (448 aa).

Positions 22, 83, and 122 each coordinate (6S)-5-formyl-5,6,7,8-tetrahydrofolate. The TrmE-type G domain occupies 219–369; that stretch reads GVKTVIVGRP…LESEILKTLK (151 aa). Asn-229 is a binding site for K(+). Residues 229–234, 248–254, and 273–276 contribute to the GTP site; these read NVGKSS, SDIAGTT, and DTAG. Residue Ser-233 coordinates Mg(2+). 3 residues coordinate K(+): Ser-248, Ile-250, and Thr-253. Thr-254 serves as a coordination point for Mg(2+). Residue Lys-448 participates in (6S)-5-formyl-5,6,7,8-tetrahydrofolate binding.

The protein belongs to the TRAFAC class TrmE-Era-EngA-EngB-Septin-like GTPase superfamily. TrmE GTPase family. As to quaternary structure, homodimer. Heterotetramer of two MnmE and two MnmG subunits. Requires K(+) as cofactor.

Its subcellular location is the cytoplasm. Its function is as follows. Exhibits a very high intrinsic GTPase hydrolysis rate. Involved in the addition of a carboxymethylaminomethyl (cmnm) group at the wobble position (U34) of certain tRNAs, forming tRNA-cmnm(5)s(2)U34. This Acholeplasma laidlawii (strain PG-8A) protein is tRNA modification GTPase MnmE.